We begin with the raw amino-acid sequence, 232 residues long: Lipoprotein-releasing system ATP-binding protein LolD (232 aa).

Residues 11–231 (VYLHDIKRQY…SIEDGVIVEL (221 aa)) enclose the ABC transporter domain. Residue 47 to 54 (APSGSGKS) participates in ATP binding.

Belongs to the ABC transporter superfamily. Lipoprotein translocase (TC 3.A.1.125) family. As to quaternary structure, the complex is composed of two ATP-binding proteins (LolD) and two transmembrane proteins (LolC and LolE).

The protein resides in the cell inner membrane. In terms of biological role, part of the ABC transporter complex LolCDE involved in the translocation of mature outer membrane-directed lipoproteins, from the inner membrane to the periplasmic chaperone, LolA. Responsible for the formation of the LolA-lipoprotein complex in an ATP-dependent manner. The chain is Lipoprotein-releasing system ATP-binding protein LolD from Rhodopseudomonas palustris (strain BisB5).